The primary structure comprises 303 residues: Sulfotransferase 6B1 (303 aa).

Residue 65-70 (KCGSNW) coordinates 3'-phosphoadenylyl sulfate. H118 acts as the Proton acceptor in catalysis. 3'-phosphoadenylyl sulfate contacts are provided by residues R140, S148, Y203, 237-242 (STFQAM), and 259-261 (RKG).

This sequence belongs to the sulfotransferase 1 family.

The protein localises to the cytoplasm. It is found in the cytosol. The enzyme catalyses thyroxine + 3'-phosphoadenylyl sulfate = thyroxine sulfate + adenosine 3',5'-bisphosphate + H(+). In terms of biological role, sulfotransferase that utilizes 3'-phospho-5'-adenylyl sulfate (PAPS) as sulfonate donor to catalyze the sulfate conjugation of thyroxine. Involved in the metabolism of thyroxine. The polypeptide is Sulfotransferase 6B1 (SULT6B1) (Pan troglodytes (Chimpanzee)).